The primary structure comprises 188 residues: RWD domain-containing protein 4 (188 aa).

An N-acetylserine modification is found at Ser2. Residues 9 to 111 (MELEALRSIY…EYAKDNKEQF (103 aa)) enclose the RWD domain. The disordered stretch occupies residues 132–167 (TPNTAPSSKKKDKKEQLSKAQKRKLADKTDHKGELP). The span at 155–166 (KLADKTDHKGEL) shows a compositional bias: basic and acidic residues.

This is RWD domain-containing protein 4 (RWDD4) from Homo sapiens (Human).